A 71-amino-acid chain; its full sequence is Large ribosomal subunit protein bL31 (71 aa).

Positions 16, 18, 38, and 41 each coordinate Zn(2+).

It belongs to the bacterial ribosomal protein bL31 family. Type A subfamily. Part of the 50S ribosomal subunit. It depends on Zn(2+) as a cofactor.

Binds the 23S rRNA. In Francisella tularensis subsp. novicida (strain U112), this protein is Large ribosomal subunit protein bL31.